The following is a 259-amino-acid chain: Glucose-1-phosphate thymidylyltransferase (259 aa).

It belongs to the inositol monophosphatase superfamily.

It catalyses the reaction dTTP + alpha-D-glucose 1-phosphate + H(+) = dTDP-alpha-D-glucose + diphosphate. Its pathway is antibiotic biosynthesis; streptomycin biosynthesis. The polypeptide is Glucose-1-phosphate thymidylyltransferase (strO) (Streptomyces griseus).